Reading from the N-terminus, the 623-residue chain is Transketolase (623 aa).

Residue M1 is modified to N-acetylmethionine. An N6-acetyllysine mark is found at K6 and K11. H37 is a substrate binding site. 2 residues coordinate thiamine diphosphate: S40 and H77. Position 104 is a phosphoserine (S104). Residue 123-125 (GSL) coordinates thiamine diphosphate. K144 bears the N6-acetyllysine mark. Position 155 (D155) interacts with Mg(2+). Thiamine diphosphate-binding residues include G156 and N185. Mg(2+)-binding residues include N185 and L187. 3 positions are modified to N6-acetyllysine: K204, K232, and K241. Thiamine diphosphate-binding residues include K244 and H258. A substrate-binding site is contributed by H258. K260 is modified (N6-acetyllysine). The residue at position 275 (Y275) is a Phosphotyrosine. Residue T287 is modified to Phosphothreonine. A Phosphoserine modification is found at S295. 2 residues coordinate substrate: R318 and S345. Position 345 is a phosphoserine (S345). Residue K352 forms a Glycyl lysine isopeptide (Lys-Gly) (interchain with G-Cter in SUMO2) linkage. The active-site Proton donor is the E366. F392 serves as a coordination point for thiamine diphosphate. Substrate is bound by residues H416 and D424. Q428 serves as a coordination point for thiamine diphosphate. Substrate is bound at residue R474. N6-acetyllysine occurs at positions 538 and 603.

Belongs to the transketolase family. In terms of assembly, homodimer. It depends on Mg(2+) as a cofactor. Requires Ca(2+) as cofactor. The cofactor is Mn(2+). Co(2+) serves as cofactor. Thiamine diphosphate is required as a cofactor.

The catalysed reaction is D-sedoheptulose 7-phosphate + D-glyceraldehyde 3-phosphate = aldehydo-D-ribose 5-phosphate + D-xylulose 5-phosphate. Its function is as follows. Catalyzes the transfer of a two-carbon ketol group from a ketose donor to an aldose acceptor, via a covalent intermediate with the cofactor thiamine pyrophosphate. The protein is Transketolase (Tkt) of Mus musculus (Mouse).